Consider the following 1020-residue polypeptide: C2 and GRAM domain-containing protein At1g03370 (1020 aa).

In terms of domain architecture, C2 1 spans 1–102; it reads MKLQVRVVEA…ENQSLGTVWY (102 aa). 5 residues coordinate Ca(2+): Asp17, Asp23, Asp69, Asp71, and Asp77. 2 stretches are compositionally biased toward polar residues: residues 134–144 and 158–172; these read TSSGDQTSASR and TCAS…SSIP. Residues 134–172 are disordered; sequence TSSGDQTSASRSPDLRLESPIDPSTCASPSRSDDASSIP. The region spanning 249-421 is the VASt 1 domain; sequence SGGVVVDQLF…LLAQSVKPVD (173 aa). A helical transmembrane segment spans residues 454–474; sequence FTVLSTFLIGIYVFVHIVFAI. Residues 517 to 635 form the C2 2 domain; it reads QARKQKGSDH…NISDLADVWV (119 aa). Asp551, Asp557, Asp604, Phe605, and Asp606 together coordinate Ca(2+). One can recognise a GRAM domain in the interval 689 to 752; it reads AFQKLFGLPQ…LWEDIEEIQV (64 aa). The VASt 2 domain occupies 848 to 1010; that stretch reads RFSEVFSLTL…MTFGFLEKEY (163 aa).

It depends on Ca(2+) as a cofactor.

The protein localises to the membrane. This Arabidopsis thaliana (Mouse-ear cress) protein is C2 and GRAM domain-containing protein At1g03370.